Reading from the N-terminus, the 616-residue chain is Elongation factor 4 (616 aa).

The tr-type G domain maps to 17 to 203 (ERIRNFCIIA…RVCELVPAPV (187 aa)). Residues 29 to 34 (DHGKST) and 150 to 153 (NKID) each bind GTP.

It belongs to the TRAFAC class translation factor GTPase superfamily. Classic translation factor GTPase family. LepA subfamily.

Its subcellular location is the cell membrane. The enzyme catalyses GTP + H2O = GDP + phosphate + H(+). In terms of biological role, required for accurate and efficient protein synthesis under certain stress conditions. May act as a fidelity factor of the translation reaction, by catalyzing a one-codon backward translocation of tRNAs on improperly translocated ribosomes. Back-translocation proceeds from a post-translocation (POST) complex to a pre-translocation (PRE) complex, thus giving elongation factor G a second chance to translocate the tRNAs correctly. Binds to ribosomes in a GTP-dependent manner. The chain is Elongation factor 4 from Corynebacterium jeikeium (strain K411).